Consider the following 396-residue polypeptide: Serine/threonine-protein kinase GRIK1 (396 aa).

The segment at 22 to 65 (ERSRHSPNPYDDDTYSHDSGETSNPGGDDEEGEEEEEVEELSRS) is disordered. Over residues 48–60 (GDDEEGEEEEEVE) the composition is skewed to acidic residues. Positions 108–369 (FVRERKIGSG…LKAVAEHPWI (262 aa)) constitute a Protein kinase domain. Residues 114–122 (IGSGSYGKV) and lysine 137 contribute to the ATP site. Threonine 154 bears the Phosphothreonine; by autocatalysis mark. Aspartate 239 (proton acceptor) is an active-site residue. Phosphoserine; by KIN10 is present on serine 261.

Belongs to the protein kinase superfamily. Ser/Thr protein kinase family. As to quaternary structure, associates with the SNF1-related protein kinase (SnRK) complex. Interacts with AL1, a geminivirus (TGMV) protein essential for viral replication. Expressed in shoot apical meristem, leaf primordium and emerging petiole (at protein level).

The protein localises to the cytoplasm. Its subcellular location is the nucleus. It catalyses the reaction L-seryl-[protein] + ATP = O-phospho-L-seryl-[protein] + ADP + H(+). It carries out the reaction L-threonyl-[protein] + ATP = O-phospho-L-threonyl-[protein] + ADP + H(+). With respect to regulation, activated when autophosphorylated at Thr-154 and inactivated when phosphorylated at Ser-261 by SnRK1.1/KIN10. Activates SnRK1.1/KIN10 and SnRK1.2/KIN11 by phosphorylation of their activation-loop 'Thr-198' and 'Thr-176', respectively. Required for the regulation by SnRK1 kinases of the transcription of a large set of genes, the modification the activity of metabolic enzymes, and the control of various nutrient-responsive cellular developmental processes. The polypeptide is Serine/threonine-protein kinase GRIK1 (GRIK1) (Arabidopsis thaliana (Mouse-ear cress)).